The chain runs to 185 residues: UPF0301 protein Shew_1144 (185 aa).

The protein belongs to the UPF0301 (AlgH) family.

This chain is UPF0301 protein Shew_1144, found in Shewanella loihica (strain ATCC BAA-1088 / PV-4).